A 513-amino-acid polypeptide reads, in one-letter code: Na(+)/H(+) antiporter NhaB (513 aa).

The next 12 membrane-spanning stretches (helical) occupy residues 23-43 (LALI…PFVA), 52-72 (IFTL…LLAI), 97-117 (LLLM…LFIF), 120-140 (LLLS…AAAF), 144-164 (FLDA…FYGI), 202-222 (LMMH…VGEP), 238-258 (FFLR…LTCL), 303-323 (AIIG…VGLI), 348-368 (TESL…AVII), 391-411 (LFYI…VGTI), 447-467 (ATPN…APLI), and 475-495 (VWMA…CVEF).

This sequence belongs to the NhaB Na(+)/H(+) (TC 2.A.34) antiporter family.

It localises to the cell inner membrane. The catalysed reaction is 2 Na(+)(in) + 3 H(+)(out) = 2 Na(+)(out) + 3 H(+)(in). Na(+)/H(+) antiporter that extrudes sodium in exchange for external protons. The polypeptide is Na(+)/H(+) antiporter NhaB (Shigella sonnei (strain Ss046)).